Reading from the N-terminus, the 807-residue chain is Enhancer of polycomb homolog 2 (807 aa).

Residues Lys-135, Lys-195, Lys-324, and Lys-362 each participate in a glycyl lysine isopeptide (Lys-Gly) (interchain with G-Cter in SUMO2) cross-link. The interval 376–396 (DEFPQVLSPVSEPEEENDPDG) is disordered. A Phosphoserine modification is found at Ser-538. The segment covering 600-613 (QLQQKQQSQHSSQQ) has biased composition (low complexity). Disordered regions lie at residues 600 to 628 (QLQQ…DCMS) and 645 to 673 (SAPV…QPSG). Polar residues-rich tracts occupy residues 614–628 (THPK…DCMS) and 657–673 (EQNT…QPSG). Ser-754 carries the phosphoserine modification.

Belongs to the enhancer of polycomb family.

The protein localises to the nucleus. May play a role in transcription or DNA repair. This Homo sapiens (Human) protein is Enhancer of polycomb homolog 2 (EPC2).